The primary structure comprises 524 residues: Putative ribose/galactose/methyl galactoside import ATP-binding protein 1 (524 aa).

ABC transporter domains follow at residues 29 to 270 (LEMR…VGRT) and 280 to 524 (VPIG…TGGH). 61-68 (GENGAGKS) lines the ATP pocket.

This sequence belongs to the ABC transporter superfamily. Carbohydrate importer 2 (CUT2) (TC 3.A.1.2) family.

It is found in the cell inner membrane. It carries out the reaction D-ribose(out) + ATP + H2O = D-ribose(in) + ADP + phosphate + H(+). The enzyme catalyses D-galactose(out) + ATP + H2O = D-galactose(in) + ADP + phosphate + H(+). In terms of biological role, part of an ABC transporter complex involved in carbohydrate import. Could be involved in ribose, galactose and/or methyl galactoside import. Responsible for energy coupling to the transport system. This is Putative ribose/galactose/methyl galactoside import ATP-binding protein 1 from Rhizobium etli (strain ATCC 51251 / DSM 11541 / JCM 21823 / NBRC 15573 / CFN 42).